The sequence spans 362 residues: MAIEPRAGILDIRPYKPGSSEAPGIENPVKLSSNENALGCSDKAAAAMTATASKLHLYPDGGATKLREAIAEAEGLEAENIVCGTGSDELLQLLGRAYLNPGDKVVQSQYGFLVYRLVAMQCGANLVSAPERDYRSDVDAILEAAGDDTRIVFLANPNNPTGTYISAAEVRRLRDGLPASTLLVLDAAYAEFVDNPDYEAGIELARERDDVIVTRTFSKIHGLAALRLGWAYGNKAIIDVLHRVRGPFNVNMAAIEAGTAAIQDRDFMKRSVEHNEEWVAFLRQQIGGLGLEVTPSVCNFVLIHFPETPGKTAADADAYLTSQGLIIRAVDPYGLPNALRATVGSETENRRLVDALSTFMKA.

Lys219 carries the N6-(pyridoxal phosphate)lysine modification.

The protein belongs to the class-II pyridoxal-phosphate-dependent aminotransferase family. Histidinol-phosphate aminotransferase subfamily. In terms of assembly, homodimer. It depends on pyridoxal 5'-phosphate as a cofactor.

It catalyses the reaction L-histidinol phosphate + 2-oxoglutarate = 3-(imidazol-4-yl)-2-oxopropyl phosphate + L-glutamate. It participates in amino-acid biosynthesis; L-histidine biosynthesis; L-histidine from 5-phospho-alpha-D-ribose 1-diphosphate: step 7/9. The chain is Histidinol-phosphate aminotransferase from Maricaulis maris (strain MCS10) (Caulobacter maris).